A 250-amino-acid polypeptide reads, in one-letter code: Acetylglutamate kinase (250 aa).

Substrate-binding positions include glycine 41 to glycine 42, arginine 63, and asparagine 156.

The protein belongs to the acetylglutamate kinase family. ArgB subfamily.

It localises to the cytoplasm. It carries out the reaction N-acetyl-L-glutamate + ATP = N-acetyl-L-glutamyl 5-phosphate + ADP. It functions in the pathway amino-acid biosynthesis; L-arginine biosynthesis; N(2)-acetyl-L-ornithine from L-glutamate: step 2/4. In terms of biological role, catalyzes the ATP-dependent phosphorylation of N-acetyl-L-glutamate. This chain is Acetylglutamate kinase, found in Listeria monocytogenes serotype 4b (strain CLIP80459).